The chain runs to 381 residues: MSLPIVIIGSGFASYQLIKTIRRTNNDCPIHVFTNDSGDDYNKPDLSHVFSKQQSPEEVVTLSGGDFAEQYNVILHRHTWVESIDTEIQAITANGEQYAYGKLVLATGSQTFIPPFHGDGCGDILTLNSLKEFAGIQQKVLESKKVLVVGGGLIGTELAMDLANAGKMVTLVEPNTHLLANMVPDFISLPLEKACKEKGITVNLSDCVQAVNKQEQGYRVTTSNGHSYYVDCVISAAGLKPNTKLATEANLMVNRGIVVDLNLQTSANNIYALGDCAEIEGKVMAYLQPILLSANALAKTLLGTDTALSMPNMMVKVKTPNYPIQLAGNTSTDIERWSVDIDTQGLCAKAYNINNQLTGFVVTNERVKNAFPLFRELNTTN.

The protein belongs to the FAD-dependent oxidoreductase family. FAD serves as cofactor.

The protein localises to the cytoplasm. The catalysed reaction is 2 reduced [nitric oxide reductase rubredoxin domain] + NAD(+) + H(+) = 2 oxidized [nitric oxide reductase rubredoxin domain] + NADH. Its pathway is nitrogen metabolism; nitric oxide reduction. Its function is as follows. One of at least two accessory proteins for anaerobic nitric oxide (NO) reductase. Reduces the rubredoxin moiety of NO reductase. This chain is Nitric oxide reductase FlRd-NAD(+) reductase, found in Aliivibrio fischeri (strain ATCC 700601 / ES114) (Vibrio fischeri).